A 498-amino-acid polypeptide reads, in one-letter code: Neuronal acetylcholine receptor subunit beta-4 (498 aa).

An N-terminal signal peptide occupies residues 1 to 21 (MRRAPSLVLFFLVALCGRGNC). Over 22 to 239 (RVANAEEKLM…RKPLFYTINL (218 aa)) the chain is Extracellular. N-linked (GlcNAc...) asparagine glycosylation is found at Asn-36, Asn-93, Asn-138, and Asn-166. The cysteines at positions 153 and 167 are disulfide-linked. Residues 240–255 (IIPCVLTTLLAILVFY) traverse the membrane as a helical segment. At 256–261 (LPSDCG) the chain is on the cytoplasmic side. Position 262 (Glu-262) interacts with Na(+). Residues 262-277 (EKMTLCISVLLALTFF) traverse the membrane as a helical segment. The Extracellular segment spans residues 278 to 296 (LLLISKIVPPTSLDVPLIG). A helical transmembrane segment spans residues 297-321 (KYLMFTMVLVTFSIVTSVCVLNVHH). Topologically, residues 322-454 (RSPSTHTMAP…QSVVEDWKYV (133 aa)) are cytoplasmic. The tract at residues 357-377 (ARAFPPSKSCVTKPEATATST) is disordered. The chain crosses the membrane as a helical span at residues 455-478 (AMVVDRLFLWVFMFVCVLGTVGLF). Over 479–498 (LPPLFQTHAASEGPYAAQRD) the chain is Extracellular.

The protein belongs to the ligand-gated ion channel (TC 1.A.9) family. Acetylcholine receptor (TC 1.A.9.1) subfamily. Beta-4/CHRNB4 sub-subfamily. Neuronal AChR is composed of two different types of subunits: alpha and beta. CHRNB4/Beta-4 subunit can be combined to CHRNA2/alpha-2, CHRNA3/alpha-3 or CHRNA4/alpha-4, CHRNA5/alpha-5 and CHRNB3/beta-3 to give rise to functional receptors. Forms stoichiometries such as (CHRNA3)2:(CHRNB4)3 or (CHRNA3:CHRNB4)2:CHRNB3. Interacts with RIC3; which is required for proper folding and assembly. Interacts with LYPD6.

The protein localises to the synaptic cell membrane. It is found in the cell membrane. It carries out the reaction Ca(2+)(in) = Ca(2+)(out). It catalyses the reaction K(+)(in) = K(+)(out). The enzyme catalyses Na(+)(in) = Na(+)(out). With respect to regulation, activated by a myriad of ligands such as acetylcholine, cytisine, nicotine, choline and epibatidine. The heteropentamer CHRNA3:CHRNB4 activity is blocked by the alpha-conotoxin ImI and AuIB. In terms of biological role, component of neuronal acetylcholine receptors (nAChRs) that function as pentameric, ligand-gated cation channels with high calcium permeability among other activities. nAChRs are excitatory neurotrasnmitter receptors formed by a collection of nAChR subunits known to mediate synaptic transmission in the nervous system and the neuromuscular junction. Each nAchR subunit confers differential attributes to channel properties, including activation, deactivation and desensitization kinetics, pH sensitivity, cation permeability, and binding to allosteric modulators. CHRNB4 forms heteropentameric neuronal acetylcholine receptors with CHRNA2, CHRNA3 and CHRNA4, as well as CHRNA5 and CHRNB3 as accesory subunits. CHRNA3:CHRNB4 being predominant in neurons of the autonomic ganglia, it is known as ganglionic nicotinic receptor. CHRNA3:CHRNB4 or CHRNA3:CHRNA5:CHRNB4 play also an important role in the habenulo-interpeduncular tract, modulating the mesolimbic dopamine system and affecting reward circuits and addiction. Hypothalamic CHRNA3:CHRNB4 nAChR activation by nicotine leads to activation of POMC neurons and a decrease in food intake. The chain is Neuronal acetylcholine receptor subunit beta-4 from Homo sapiens (Human).